The following is a 1370-amino-acid chain: Reverse gyrase 1 (1370 aa).

The segment at 6-47 (AASRGVYRYLCPNCGGPNSEERLSRGLPCPRCLPRLPRKGVS) adopts an RG N-terminal-type zinc-finger fold. Zn(2+) contacts are provided by Cys-16, Cys-19, Cys-34, and Cys-37. ATP is bound by residues Gln-95 and 112–119 (APTGVGKT). The Helicase ATP-binding domain occupies 99 to 287 (AKRLARGDSF…RKKLLEVKRR (189 aa)). Residues 220-223 (DDVD) carry the DEAD box motif. A topoisomerase I region spans residues 643–1370 (ELVRTALLVV…VSRVWGAGVG (728 aa)). The 179-residue stretch at 647–825 (TALLVVESPN…DIKRLEFHEV (179 aa)) folds into the Toprim domain. Residue Glu-653 coordinates Mg(2+). An RG C-terminal-type zinc finger spans residues 744–772 (IKRCLDCGYQFVDEASRCPRCGSELIRNS). Cys-747, Cys-750, Cys-761, and Cys-764 together coordinate Zn(2+). Asp-794 is a Mg(2+) binding site. The Topo IA-type catalytic domain maps to 841-1323 (DDNLVDAQVV…SVFNEISDLA (483 aa)). The O-(5'-phospho-DNA)-tyrosine intermediate role is filled by Tyr-1028.

It in the N-terminal section; belongs to the DEAD box helicase family. DDVD subfamily. The protein in the C-terminal section; belongs to the type IA topoisomerase family. As to quaternary structure, monomer. The cofactor is Zn(2+). Requires Mg(2+) as cofactor.

It localises to the cytoplasm. It carries out the reaction ATP + H2O = ADP + phosphate + H(+). In terms of biological role, modifies the topological state of DNA by introducing positive supercoils in an ATP-dependent process, increasing the linking number in steps of +1. Binds to single-stranded DNA, transiently cleaves and then rejoins the ends, introducing a positive supercoil in the process. The scissile phosphodiester is attacked by the catalytic tyrosine of the enzyme, resulting in the formation of a DNA-(5'-phosphotyrosyl)-enzyme intermediate. Probably involved in rewinding DNA strands in regions of the chromosome that have opened up to allow replication, transcription, DNA repair and/or for DNA protection. In Aeropyrum pernix (strain ATCC 700893 / DSM 11879 / JCM 9820 / NBRC 100138 / K1), this protein is Reverse gyrase 1.